Consider the following 501-residue polypeptide: Protein DETOXIFICATION 37 (501 aa).

12 consecutive transmembrane segments (helical) span residues 44-64, 84-104, 134-154, 163-183, 200-220, 222-242, 280-300, 310-330, 352-372, 396-416, 422-442, and 453-473; these read MMIE…VYVI, LAAA…LLLG, VVLI…NPIL, VATL…AYAV, SAYI…IAVY, LGYG…IIVV, AVML…AGLL, LAIC…FNAA, VVTT…VLSW, FLAI…VAVG, FVAY…GFVL, and IWTG…IVTL.

This sequence belongs to the multi antimicrobial extrusion (MATE) (TC 2.A.66.1) family.

The protein localises to the membrane. The protein is Protein DETOXIFICATION 37 of Arabidopsis thaliana (Mouse-ear cress).